The chain runs to 410 residues: Tryptophan synthase beta chain (410 aa).

An N6-(pyridoxal phosphate)lysine modification is found at K100.

This sequence belongs to the TrpB family. In terms of assembly, tetramer of two alpha and two beta chains. Pyridoxal 5'-phosphate is required as a cofactor.

The enzyme catalyses (1S,2R)-1-C-(indol-3-yl)glycerol 3-phosphate + L-serine = D-glyceraldehyde 3-phosphate + L-tryptophan + H2O. It participates in amino-acid biosynthesis; L-tryptophan biosynthesis; L-tryptophan from chorismate: step 5/5. Its function is as follows. The beta subunit is responsible for the synthesis of L-tryptophan from indole and L-serine. This is Tryptophan synthase beta chain from Pyrobaculum aerophilum (strain ATCC 51768 / DSM 7523 / JCM 9630 / CIP 104966 / NBRC 100827 / IM2).